The primary structure comprises 304 residues: Cell division protein ZipA (304 aa).

The Periplasmic segment spans residues 1 to 5; it reads MQDLR. Residues 6–26 traverse the membrane as a helical segment; it reads LILIVVGAIAIIALLLHGLWT. At 27 to 304 the chain is on the cytoplasmic side; the sequence is SRKERSSVFR…IRDVIDANSH (278 aa). The tract at residues 31 to 165 is disordered; that stretch reads RSSVFRDRPH…PEPQSQPKQK (135 aa). Residues 121 to 132 show a composition bias toward basic and acidic residues; the sequence is ARPETHKPDQPE. The segment covering 137-158 has biased composition (low complexity); that stretch reads AAPAAAETAPAPAEPAQKTPEP.

Belongs to the ZipA family. As to quaternary structure, interacts with FtsZ via their C-terminal domains.

It is found in the cell inner membrane. In terms of biological role, essential cell division protein that stabilizes the FtsZ protofilaments by cross-linking them and that serves as a cytoplasmic membrane anchor for the Z ring. Also required for the recruitment to the septal ring of downstream cell division proteins. The polypeptide is Cell division protein ZipA (Erwinia tasmaniensis (strain DSM 17950 / CFBP 7177 / CIP 109463 / NCPPB 4357 / Et1/99)).